Here is a 255-residue protein sequence, read N- to C-terminus: Folate receptor beta (255 aa).

An N-terminal signal peptide occupies residues 1 to 16 (MVWKWMPLLLLLVCVA). Cystine bridges form between Cys31–Cys59, Cys51–Cys99, Cys60–Cys103, Cys83–Cys169, Cys90–Cys140, Cys129–Cys203, Cys133–Cys183, and Cys146–Cys163. Folate is bound by residues Asp97 and Tyr101. N-linked (GlcNAc...) asparagine glycosylation occurs at Asn115. Residues 118–122 (WRKER), 151–156 (HRGWDW), and Ser190 each bind folate. The N-linked (GlcNAc...) asparagine glycan is linked to Asn195. Asn230 carries the GPI-anchor amidated asparagine lipid modification. The propeptide at 231-255 (AGEMLHGTGGLLLSLALMLQLWLLG) is removed in mature form.

The protein belongs to the folate receptor family. Post-translationally, N-glycosylated. Expressed in placenta and hematopoietic cells. Expression is increased in malignant tissues.

The protein localises to the cell membrane. It is found in the secreted. Its function is as follows. Binds to folate and reduced folic acid derivatives and mediates delivery of 5-methyltetrahydrofolate and folate analogs into the interior of cells. Has high affinity for folate and folic acid analogs at neutral pH. Exposure to slightly acidic pH after receptor endocytosis triggers a conformation change that strongly reduces its affinity for folates and mediates their release. The chain is Folate receptor beta (FOLR2) from Homo sapiens (Human).